The chain runs to 193 residues: Dual-action ribosomal maturation protein DarP (193 aa).

Residues 1 to 10 show a composition bias toward basic and acidic residues; it reads MRGRDEDTGE. Disordered stretches follow at residues 1 to 20 and 171 to 193; these read MRGR…SQQR and QEQG…EDDE. The span at 181 to 193 shows a compositional bias: acidic residues; that stretch reads GLEDGESALEDDE.

It belongs to the DarP family.

It is found in the cytoplasm. Functionally, member of a network of 50S ribosomal subunit biogenesis factors which assembles along the 30S-50S interface, preventing incorrect 23S rRNA structures from forming. Promotes peptidyl transferase center (PTC) maturation. The chain is Dual-action ribosomal maturation protein DarP from Xanthomonas oryzae pv. oryzae (strain MAFF 311018).